The sequence spans 714 residues: ATP-dependent DNA helicase DinG (714 aa).

The region spanning 17 to 294 (ALQDQIPDFI…TCMEQFRPKT (278 aa)) is the Helicase ATP-binding domain. Residue 54-61 (APTGVGKT) coordinates ATP. Residues cysteine 120, cysteine 194, cysteine 199, and cysteine 205 each contribute to the [4Fe-4S] cluster site. A DEAH box motif is present at residues 248–251 (DEGH). Positions 517–698 (HIAEMAAYFR…VFPIEQPAVP (182 aa)) constitute a Helicase C-terminal domain.

This sequence belongs to the helicase family. DinG subfamily. Type 1 sub-subfamily. It depends on [4Fe-4S] cluster as a cofactor.

It carries out the reaction Couples ATP hydrolysis with the unwinding of duplex DNA at the replication fork by translocating in the 5'-3' direction. This creates two antiparallel DNA single strands (ssDNA). The leading ssDNA polymer is the template for DNA polymerase III holoenzyme which synthesizes a continuous strand.. The catalysed reaction is ATP + H2O = ADP + phosphate + H(+). Its function is as follows. DNA-dependent ATPase and 5'-3' DNA helicase. Unwinds D-loops, R-loops, forked DNA and G-quadruplex DNA. This chain is ATP-dependent DNA helicase DinG, found in Salmonella typhimurium (strain LT2 / SGSC1412 / ATCC 700720).